A 156-amino-acid polypeptide reads, in one-letter code: Peptide deformylase (156 aa).

Fe cation is bound by residues C90 and H132. E133 is a catalytic residue. H136 serves as a coordination point for Fe cation.

It belongs to the polypeptide deformylase family. Fe(2+) is required as a cofactor.

It carries out the reaction N-terminal N-formyl-L-methionyl-[peptide] + H2O = N-terminal L-methionyl-[peptide] + formate. Removes the formyl group from the N-terminal Met of newly synthesized proteins. Requires at least a dipeptide for an efficient rate of reaction. N-terminal L-methionine is a prerequisite for activity but the enzyme has broad specificity at other positions. The polypeptide is Peptide deformylase (Natranaerobius thermophilus (strain ATCC BAA-1301 / DSM 18059 / JW/NM-WN-LF)).